A 197-amino-acid polypeptide reads, in one-letter code: Rac-like GTP-binding protein ARAC6 (197 aa).

GTP is bound at residue 13–20; it reads GDGAVGKT. The Effector region motif lies at 35-43; the sequence is YVPTVFDNF. Residues 60-64 and 118-121 contribute to the GTP site; these read DTAGQ and TKLD. Residue Ser-160 coordinates GDP. Residue Cys-194 is modified to Cysteine methyl ester. Residue Cys-194 is the site of S-geranylgeranyl cysteine attachment. Residues 195-197 constitute a propeptide, removed in mature form; sequence SIL.

This sequence belongs to the small GTPase superfamily. Rho family. As to quaternary structure, interacts with SPK1. Ubiquitous. Preferentially expressed in mature pollen and pollen tubes.

Its subcellular location is the cytoplasm. It localises to the membrane. Functionally, may be involved in cell polarity control during the actin-dependent tip growth of pollen tubes. Its function is as follows. Inactive GDP-bound Rho GTPases reside in the cytosol, are found in a complex with Rho GDP-dissociation inhibitors (Rho GDIs), and are released from the GDI protein in order to translocate to membranes upon activation. This chain is Rac-like GTP-binding protein ARAC6 (ARAC6), found in Arabidopsis thaliana (Mouse-ear cress).